The chain runs to 398 residues: Na(+)/H(+) antiporter NhaA (398 aa).

The next 12 helical transmembrane spans lie at 21-41 (AGGI…NSPL), 56-76 (LSVS…LVGL), 94-114 (VLPG…YVFI), 124-144 (GWAI…SLLG), 153-173 (VFLT…IAIF), 176-196 (SGLS…LVVL), 201-221 (VMTL…VLKS), 263-283 (IVPF…SLAG), 284-304 (LSLG…LVVG), 306-326 (LVGV…DLPA), 333-353 (MIGI…IGLL), and 367-387 (VGIL…LLMA).

It belongs to the NhaA Na(+)/H(+) (TC 2.A.33) antiporter family.

The protein localises to the cell inner membrane. It catalyses the reaction Na(+)(in) + 2 H(+)(out) = Na(+)(out) + 2 H(+)(in). Na(+)/H(+) antiporter that extrudes sodium in exchange for external protons. The chain is Na(+)/H(+) antiporter NhaA from Mesorhizobium japonicum (strain LMG 29417 / CECT 9101 / MAFF 303099) (Mesorhizobium loti (strain MAFF 303099)).